A 377-amino-acid chain; its full sequence is Glutamate 5-kinase (377 aa).

Residue Lys-20 coordinates ATP. Ser-60, Asp-147, and Asn-159 together coordinate substrate. An ATP-binding site is contributed by 179–180; that stretch reads TD. The PUA domain occupies 285-363; it reads AGRLVIDAGA…DKVHQVLGEA (79 aa).

It belongs to the glutamate 5-kinase family.

Its subcellular location is the cytoplasm. It catalyses the reaction L-glutamate + ATP = L-glutamyl 5-phosphate + ADP. The protein operates within amino-acid biosynthesis; L-proline biosynthesis; L-glutamate 5-semialdehyde from L-glutamate: step 1/2. Catalyzes the transfer of a phosphate group to glutamate to form L-glutamate 5-phosphate. This Acinetobacter baylyi (strain ATCC 33305 / BD413 / ADP1) protein is Glutamate 5-kinase.